The primary structure comprises 118 residues: Small ribosomal subunit protein uS13 (118 aa).

The segment at 91-118 (HRHSLPVRGQRTKTNARTRKGPRKPIRK) is disordered.

Belongs to the universal ribosomal protein uS13 family. In terms of assembly, part of the 30S ribosomal subunit. Forms a loose heterodimer with protein S19. Forms two bridges to the 50S subunit in the 70S ribosome.

Functionally, located at the top of the head of the 30S subunit, it contacts several helices of the 16S rRNA. In the 70S ribosome it contacts the 23S rRNA (bridge B1a) and protein L5 of the 50S subunit (bridge B1b), connecting the 2 subunits; these bridges are implicated in subunit movement. Contacts the tRNAs in the A and P-sites. This is Small ribosomal subunit protein uS13 from Hahella chejuensis (strain KCTC 2396).